The primary structure comprises 1203 residues: Kinesin-like protein KIN-14Q (1203 aa).

Residues 1-28 are disordered; that stretch reads MEDCCDPLLATDASPRPESFSRSEKDIA. Residues 19 to 28 are compositionally biased toward basic and acidic residues; that stretch reads SFSRSEKDIA. The stretch at 336-395 forms a coiled coil; sequence ENLVCRAEEEAEGMRSDCEQQRKEMEDMKRMVEELKLENQQKTRECEEALNSLSEIQNEL. Residues 499-825 form the Kinesin motor domain; sequence NIRVFCRCRP…LNFASRVRGI (327 aa). 582-589 contributes to the ATP binding site; that stretch reads GQTGTGKT. The stretch at 846 to 901 forms a coiled coil; the sequence is VEKWKQDMKGKDEQIRKMEETMYGLEAKIKERDTKNKTLQDKVKELESQLLVERKL. The interval 907-931 is disordered; it reads DTKIAEQQTKQQTEDENNTSKRPPL.

Belongs to the TRAFAC class myosin-kinesin ATPase superfamily. Kinesin family. KIN-14 subfamily.

The protein is Kinesin-like protein KIN-14Q of Arabidopsis thaliana (Mouse-ear cress).